The chain runs to 576 residues: Polyphenol oxidase 3 (576 aa).

Cu cation contacts are provided by H61, H85, H94, H259, H263, and H296. Positions 83-85 (CTH) form a cross-link, 2'-(S-cysteinyl)-histidine (Cys-His). Substrate is bound at residue H263. Positions 393 to 576 (FVTTQTENPA…ILDDIIHRVN (184 aa)) are cleaved as a propeptide — removed in mature form.

The protein belongs to the tyrosinase family. As to quaternary structure, tetramer composed of two subunits of PPO3 (H subunits) and two subunits of the as yet uncharacterized product of ORF239342 (L subunits). It depends on Cu(2+) as a cofactor. In terms of processing, the C-ter is probably cleaved after Gly-392 since the mature active protein is smaller than the protein encoded by the gene.

It catalyses the reaction 2 L-dopa + O2 = 2 L-dopaquinone + 2 H2O. The catalysed reaction is L-tyrosine + O2 = L-dopaquinone + H2O. In terms of biological role, copper-containing oxidase that catalyzes both the o-hydroxylation of monophenols and the subsequent oxidation of the resulting o-diphenols into reactive o-quinones, which evolve spontaneously to produce intermediates, which associate in dark brown pigments. Involved in the initial step of melanin synthesis. Melanins constitute a mechanism of defense and resistance to stress such as UV radiations, free radicals, gamma rays, dehydratation and extreme temperatures, and contribute to the fungal cell-wall resistance against hydrolytic enzymes in avoiding cellular lysis. Fungal pigments are also involved in the formation and stability of spores. The sequence is that of Polyphenol oxidase 3 (PPO3) from Agaricus bisporus (White button mushroom).